Here is a 962-residue protein sequence, read N- to C-terminus: CRACD-like protein (962 aa).

3 disordered regions span residues 38 to 102 (GKKK…PESG), 131 to 174 (NVKM…HDVG), and 212 to 871 (PAES…QEPV). Residues 46 to 61 (PSSTGSSTWKQSQTRN) are compositionally biased toward polar residues. Ser-92 carries the post-translational modification Phosphoserine. Basic residues predominate over residues 224–244 (AKHKLQVKPRNQRSSKMRRLS). Polar residues predominate over residues 245-256 (SRAQSESLSDLT). Positions 266–278 (EKPLLEVSPEERP) are enriched in basic and acidic residues. 2 stretches are compositionally biased toward pro residues: residues 292–303 (EPGPPAPLPPPG) and 354–365 (PPSPPEGPPNPG). Positions 407 to 425 (PEGDTTPPETDPAATSEAP) are enriched in low complexity. 2 stretches are compositionally biased toward basic and acidic residues: residues 429–440 (DGPERSVPKEAE) and 459–480 (EPER…ERIG). Ser-490 is subject to Phosphoserine. Positions 503-521 (AAASEGPAASPPLAAAESP) are enriched in low complexity. Composition is skewed to basic and acidic residues over residues 536-546 (APERPKAERAE), 555-570 (AAPE…ELRG), 631-642 (KLAERGPQDSGD), and 709-728 (YSAE…EEKC). Pro residues predominate over residues 753–764 (PEPLSSKPPLPR). Basic and acidic residues-rich tracts occupy residues 784–806 (PGER…RGAE) and 844–869 (QEDK…RGQE).

The sequence is that of CRACD-like protein from Homo sapiens (Human).